The following is a 64-amino-acid chain: Large ribosomal subunit protein bL35 (64 aa).

The segment at 18 to 39 (GSGLVKHYPSNKHHKNTHKKEN) is disordered. Over residues 26–39 (PSNKHHKNTHKKEN) the composition is skewed to basic residues.

It belongs to the bacterial ribosomal protein bL35 family.

In Symbiobacterium thermophilum (strain DSM 24528 / JCM 14929 / IAM 14863 / T), this protein is Large ribosomal subunit protein bL35.